Consider the following 172-residue polypeptide: Trypsin inhibitor 1A (172 aa).

2 cysteine pairs are disulfide-bonded: Cys-40–Cys-84 and Cys-133–Cys-139.

It belongs to the protease inhibitor I3 (leguminous Kunitz-type inhibitor) family.

In terms of biological role, WTI-1B inhibits trypsin stoichiometrically. The chain is Trypsin inhibitor 1A from Psophocarpus tetragonolobus (Winged bean).